The following is a 444-amino-acid chain: Type II NADH:quinone oxidoreductase (444 aa).

FAD is bound by residues 8–12, Asn38, and Ser120; that span reads GGGAG. Residues 186 to 191 and Gly285 contribute to the NAD(+) site; that span reads VGGGAT. Residues Asp325 and Ala341 each contribute to the FAD site.

The protein belongs to the NADH dehydrogenase family. FAD serves as cofactor.

It is found in the cell inner membrane. It carries out the reaction a quinone + NADH + H(+) = a quinol + NAD(+). The enzyme catalyses a ubiquinone + NADH + H(+) = a ubiquinol + NAD(+). Functionally, alternative, nonproton pumping NADH:quinone oxidoreductase that delivers electrons to the respiratory chain by oxidation of NADH and reduction of quinones. Utilizes NADH exclusively, and electron flow from NADH to ubiquinone does not generate an electrochemical gradient. This Haemophilus influenzae (strain ATCC 51907 / DSM 11121 / KW20 / Rd) protein is Type II NADH:quinone oxidoreductase (ndh).